Reading from the N-terminus, the 166-residue chain is Succinate dehydrogenase assembly factor 2, mitochondrial (166 aa).

Residues 1–29 constitute a mitochondrion transit peptide; sequence MAVVAVFPALARMLAVSRRRLVSPSLSMT.

Belongs to the SDHAF2 family. In terms of assembly, interacts with SDHA within the SDH catalytic dimer.

It localises to the mitochondrion matrix. Functionally, plays an essential role in the assembly of succinate dehydrogenase (SDH), an enzyme complex (also referred to as respiratory complex II) that is a component of both the tricarboxylic acid (TCA) cycle and the mitochondrial electron transport chain, and which couples the oxidation of succinate to fumarate with the reduction of ubiquinone (coenzyme Q) to ubiquinol. Required for flavinylation (covalent attachment of FAD) of the flavoprotein subunit SDHA of the SDH catalytic dimer. This chain is Succinate dehydrogenase assembly factor 2, mitochondrial, found in Bos taurus (Bovine).